We begin with the raw amino-acid sequence, 184 residues long: Large ribosomal subunit protein uL6 (184 aa).

It belongs to the universal ribosomal protein uL6 family. Part of the 50S ribosomal subunit.

Functionally, this protein binds to the 23S rRNA, and is important in its secondary structure. It is located near the subunit interface in the base of the L7/L12 stalk, and near the tRNA binding site of the peptidyltransferase center. This is Large ribosomal subunit protein uL6 from Pyrococcus abyssi (strain GE5 / Orsay).